A 355-amino-acid chain; its full sequence is Phenylalanine--tRNA ligase alpha subunit (355 aa).

Glu273 contacts Mg(2+).

It belongs to the class-II aminoacyl-tRNA synthetase family. Phe-tRNA synthetase alpha subunit type 1 subfamily. Tetramer of two alpha and two beta subunits. The cofactor is Mg(2+).

The protein resides in the cytoplasm. It catalyses the reaction tRNA(Phe) + L-phenylalanine + ATP = L-phenylalanyl-tRNA(Phe) + AMP + diphosphate + H(+). The polypeptide is Phenylalanine--tRNA ligase alpha subunit (Bifidobacterium adolescentis (strain ATCC 15703 / DSM 20083 / NCTC 11814 / E194a)).